The primary structure comprises 282 residues: Undecaprenyl-diphosphatase (282 aa).

Transmembrane regions (helical) follow at residues 6-26, 45-65, 85-105, 112-132, 200-220, 230-250, and 262-282; these read LYFV…FIPV, SGKV…MWIF, LFTR…AIFI, FYHP…MLWV, ATEF…VYDM, HDLG…LLVV, and YRGF…WLAF.

This sequence belongs to the UppP family.

It is found in the cell inner membrane. The enzyme catalyses di-trans,octa-cis-undecaprenyl diphosphate + H2O = di-trans,octa-cis-undecaprenyl phosphate + phosphate + H(+). Its function is as follows. Catalyzes the dephosphorylation of undecaprenyl diphosphate (UPP). Confers resistance to bacitracin. The chain is Undecaprenyl-diphosphatase from Bordetella avium (strain 197N).